Consider the following 328-residue polypeptide: MINIAIDAMGGDFGEKPIIEGVLKALEAKPFNAILVGNSKILKPLIPKKLEQYIQYEEASEIFSMNENATDALKNKETTIYKAINLLKEKKVDAVVSAGHSGASMSLATLRLGRLKGISRPAIATLMPNIINKTLLLDVGANTDCKAENLFQFAIMGEVYARAIMQIQKPRLALLSNGEEECKGNELTKESHQLMKKIPNFIGNAEGRDIFNGEIDVLVCDGFDGNVILKACEGVATAIFQLLKNEVKQSFISKIGALLMKPSFKKLKKHTDWQEYGGAPLLGVNGCVIISHGKSDSRAIKNAIFQAINFSQSHINELIENELGKYNA.

It belongs to the PlsX family. As to quaternary structure, homodimer. Probably interacts with PlsY.

The protein resides in the cytoplasm. It catalyses the reaction a fatty acyl-[ACP] + phosphate = an acyl phosphate + holo-[ACP]. Its pathway is lipid metabolism; phospholipid metabolism. Catalyzes the reversible formation of acyl-phosphate (acyl-PO(4)) from acyl-[acyl-carrier-protein] (acyl-ACP). This enzyme utilizes acyl-ACP as fatty acyl donor, but not acyl-CoA. The chain is Phosphate acyltransferase from Campylobacter jejuni subsp. jejuni serotype O:6 (strain 81116 / NCTC 11828).